The sequence spans 654 residues: DNA ligase (654 aa).

NAD(+)-binding positions include 31 to 35 (DSEYD), 80 to 81 (SL), and Glu-109. The N6-AMP-lysine intermediate role is filled by Lys-111. Residues Arg-132, Glu-166, Lys-280, and Lys-304 each contribute to the NAD(+) site. Zn(2+) is bound by residues Cys-398, Cys-401, Cys-416, and Cys-421. The BRCT domain maps to 579–654 (NIEGILSGKT…IWSEQDLLDL (76 aa)).

This sequence belongs to the NAD-dependent DNA ligase family. LigA subfamily. Mg(2+) serves as cofactor. It depends on Mn(2+) as a cofactor.

The enzyme catalyses NAD(+) + (deoxyribonucleotide)n-3'-hydroxyl + 5'-phospho-(deoxyribonucleotide)m = (deoxyribonucleotide)n+m + AMP + beta-nicotinamide D-nucleotide.. Functionally, DNA ligase that catalyzes the formation of phosphodiester linkages between 5'-phosphoryl and 3'-hydroxyl groups in double-stranded DNA using NAD as a coenzyme and as the energy source for the reaction. It is essential for DNA replication and repair of damaged DNA. The polypeptide is DNA ligase (Lactococcus lactis subsp. lactis (strain IL1403) (Streptococcus lactis)).